Reading from the N-terminus, the 40-residue chain is Large ribosomal subunit protein bL36B (40 aa).

Belongs to the bacterial ribosomal protein bL36 family.

In Leifsonia xyli subsp. xyli (strain CTCB07), this protein is Large ribosomal subunit protein bL36B.